We begin with the raw amino-acid sequence, 211 residues long: Nucleoside diphosphate kinase homolog 5 (211 aa).

The tract at residues 13 to 145 is NDK; sequence EKTLALIKPD…EREIRFMFPA (133 aa).

The protein belongs to the NDK family. In terms of assembly, component of the axonemal radial spoke complex 1 (RS1), at least composed of spoke head proteins RSPH1, RSPH3, RSPH9 and the cilia-specific component RSPH4A or sperm-specific component RSPH6A, spoke stalk proteins RSPH14, DNAJB13, DYDC1, ROPN1L and NME5, and the anchor protein IQUB. Interacts with IQUB. Expressed in the trachea, ependymal cells and oviduct (at protein level). Expressed predominantly in germ cells of the testis. Not expressed in testicular somatic cells.

Its subcellular location is the cell projection. It localises to the cilium. It is found in the cytoplasm. The protein resides in the cytoskeleton. The protein localises to the flagellum axoneme. Functionally, functions as part of axonemal radial spoke complexes that play an important part in the motility of sperm and cilia. Does not seem to have nucleoside diphosphate kinase (NDPK) activity. Confers protection from cell death by BAX and alters the cellular levels of several antioxidant enzymes including GPX5. May play a role in spermiogenesis by increasing the ability of late-stage spermatids to eliminate reactive oxygen species. The sequence is that of Nucleoside diphosphate kinase homolog 5 (Nme5) from Mus musculus (Mouse).